We begin with the raw amino-acid sequence, 182 residues long: MEKLRESLHEAPIIDKDGYSYLVHPLSNGVPMLEPELLREVVVGVTRAADLDVDKIVAPEAMGIHIATALSLQTDIPLVVIRKRSYGLDDEVPLHKTTGYSESEMFINDIEAGDDLLIVDDLLSTGGTMAAICEALDDIGADISDIVVVFRKQGESALDDTDYDVTSLLDISVDQDGVTIHD.

This sequence belongs to the purine/pyrimidine phosphoribosyltransferase family. Archaeal HPRT subfamily.

Functionally, may catalyze a purine salvage reaction, the substrate is unknown. The sequence is that of HGPRTase-like protein 1 from Haloarcula marismortui (strain ATCC 43049 / DSM 3752 / JCM 8966 / VKM B-1809) (Halobacterium marismortui).